Consider the following 514-residue polypeptide: 2,3-bisphosphoglycerate-independent phosphoglycerate mutase (514 aa).

Aspartate 14 and serine 64 together coordinate Mn(2+). Serine 64 functions as the Phosphoserine intermediate in the catalytic mechanism. Substrate is bound by residues histidine 125, 155 to 156, arginine 187, arginine 193, 263 to 266, and lysine 336; these read RD and RADR. Mn(2+)-binding residues include aspartate 403, histidine 407, aspartate 444, histidine 445, and histidine 463.

The protein belongs to the BPG-independent phosphoglycerate mutase family. Monomer. Requires Mn(2+) as cofactor.

The enzyme catalyses (2R)-2-phosphoglycerate = (2R)-3-phosphoglycerate. The protein operates within carbohydrate degradation; glycolysis; pyruvate from D-glyceraldehyde 3-phosphate: step 3/5. In terms of biological role, catalyzes the interconversion of 2-phosphoglycerate and 3-phosphoglycerate. The protein is 2,3-bisphosphoglycerate-independent phosphoglycerate mutase of Salmonella paratyphi B (strain ATCC BAA-1250 / SPB7).